The chain runs to 634 residues: Sodium-dependent neutral amino acid transporter B(0)AT1 (634 aa).

Over 1–41 the chain is Cytoplasmic; that stretch reads MVRLVLPNPGLDARIPSLAELETIEQEEASSRPKWDNKAQY. Serine 17 is modified (phosphoserine). Residues 42–62 traverse the membrane as a helical segment; it reads MLTCLGFCVGLGNVWRFPYLC. The Extracellular segment spans residues 63-67; sequence QSHGG. The chain crosses the membrane as a helical span at residues 68–88; that stretch reads GAFMIPFLILLVLEGIPLLYL. At 89-120 the chain is on the cytoplasmic side; sequence EFAIGQRLRRGSLGVWSSIHPALKGLGLASML. The chain crosses the membrane as a helical span at residues 121-141; it reads TSFMVGLYYNTIISWIMWYLF. Over 142-192 the chain is Extracellular; the sequence is NSFQEPLPWSDCPLNENQTGYVDECARSSPVDYFWYRETLNISTSISDSGS. N-linked (GlcNAc...) asparagine glycans are attached at residues asparagine 158 and asparagine 182. Residues 193–213 form a helical membrane-spanning segment; that stretch reads IQWWMLLCLACAWSVLYMCTI. Residues 214–221 lie on the Cytoplasmic side of the membrane; that stretch reads RGIETTGK. The chain crosses the membrane as a helical span at residues 222–242; sequence AVYITSTLPYVVLTIFLIRGL. Residues 243–268 are Extracellular-facing; the sequence is TLKGATNGIVFLFTPNVTELAQPDTW. Asparagine 258 is a glycosylation site (N-linked (GlcNAc...) asparagine). Residues 269 to 289 form a helical membrane-spanning segment; that stretch reads LDAGAQVFFSFSLAFGGLISF. Residues 290 to 304 lie on the Cytoplasmic side of the membrane; sequence SSYNSVHNNCEKDSV. Residues 305–325 traverse the membrane as a helical segment; that stretch reads IVSIINGFTSVYVAIVVYSVI. Residues 326–413 are Extracellular-facing; sequence GFRATQRYDD…TEAITKMPLS (88 aa). Asparagine 354 and asparagine 368 each carry an N-linked (GlcNAc...) asparagine glycan. Residues 414–434 form a helical membrane-spanning segment; it reads PLWSVLFFIMLFCLGLSSMFG. The Cytoplasmic portion of the chain corresponds to 435-456; that stretch reads NMEGVVVPLQDLRVIPPKWPKE. Residues 457–477 traverse the membrane as a helical segment; sequence VLTGLICLGTFLIGFIFTLNS. Topologically, residues 478-490 are extracellular; that stretch reads GQYWLSLLDSYAG. The chain crosses the membrane as a helical span at residues 491-511; sequence SIPLLIIAFCEMFSVVYVYGV. The Cytoplasmic portion of the chain corresponds to 512 to 531; that stretch reads DRFNKDIEFMIGHKPNIFWQ. Residues 532–552 traverse the membrane as a helical segment; it reads VTWRVVSPLLMLIIFLFFFVV. The Extracellular portion of the chain corresponds to 553–581; sequence EVSQELTYSIWDPGYEEFPKSQKISYPNW. The chain crosses the membrane as a helical span at residues 582-602; the sequence is VYVVVVIVAGVPSLTIPGYAI. Over 603-634 the chain is Cytoplasmic; the sequence is YKLIRNHCQKPGDHQGLVSTLSTASMNGDLKY. Serine 627 bears the Phosphoserine mark.

Belongs to the sodium:neurotransmitter symporter (SNF) (TC 2.A.22) family. SLC6A19 subfamily. Interacts in a tissue-specific manner with ACE2 in small intestine and with CLTRN in the kidney. Interacts with CLTRN; this interaction is required for trafficking of SLC6A19 to the plasma membrane and for its catalytic activation in kidneys. Interacts with ACE2; this interaction is required for trafficking of SLC6A19 to the plasma membrane and for its catalytic activation in intestine. Interacts with ANPEP; the interaction positively regulates its amino acid transporter activity. As to expression, robust expression in kidney and small intestine, with minimal expression in pancreas. Also expressed in stomach, liver, duodenum, ileocecum, colon and prostate. Not detected in testis, whole brain, cerebellum, fetal liver, spleen, skeletal muscle, uterus, heart or lung.

It localises to the cell membrane. Its subcellular location is the apical cell membrane. The catalysed reaction is L-alanine(in) + Na(+)(in) = L-alanine(out) + Na(+)(out). The enzyme catalyses L-cysteine(in) + Na(+)(in) = L-cysteine(out) + Na(+)(out). It catalyses the reaction L-glutamine(in) + Na(+)(in) = L-glutamine(out) + Na(+)(out). It carries out the reaction glycine(in) + Na(+)(in) = glycine(out) + Na(+)(out). The catalysed reaction is L-isoleucine(in) + Na(+)(in) = L-isoleucine(out) + Na(+)(out). The enzyme catalyses L-leucine(in) + Na(+)(in) = L-leucine(out) + Na(+)(out). It catalyses the reaction L-methionine(in) + Na(+)(in) = L-methionine(out) + Na(+)(out). It carries out the reaction L-phenylalanine(in) + Na(+)(in) = L-phenylalanine(out) + Na(+)(out). The catalysed reaction is L-serine(in) + Na(+)(in) = L-serine(out) + Na(+)(out). The enzyme catalyses L-tryptophan(in) + Na(+)(in) = L-tryptophan(out) + Na(+)(out). It catalyses the reaction L-tyrosine(in) + Na(+)(in) = L-tyrosine(out) + Na(+)(out). It carries out the reaction L-valine(in) + Na(+)(in) = L-valine(out) + Na(+)(out). Its function is as follows. Transporter that mediates resorption of neutral amino acids across the apical membrane of renal and intestinal epithelial cells. This uptake is sodium-dependent and chloride-independent. Requires CLTRN in kidney or ACE2 in intestine for cell surface expression and amino acid transporter activity. The protein is Sodium-dependent neutral amino acid transporter B(0)AT1 (SLC6A19) of Homo sapiens (Human).